Consider the following 352-residue polypeptide: Quinolinate synthase (352 aa).

Positions 48 and 69 each coordinate iminosuccinate. Residue C114 participates in [4Fe-4S] cluster binding. Iminosuccinate is bound by residues 140–142 (YAN) and S157. C201 is a binding site for [4Fe-4S] cluster. Residues 227–229 (HPE) and T244 each bind iminosuccinate. C298 is a binding site for [4Fe-4S] cluster.

Belongs to the quinolinate synthase family. Type 1 subfamily. [4Fe-4S] cluster is required as a cofactor.

It is found in the cytoplasm. It catalyses the reaction iminosuccinate + dihydroxyacetone phosphate = quinolinate + phosphate + 2 H2O + H(+). The protein operates within cofactor biosynthesis; NAD(+) biosynthesis; quinolinate from iminoaspartate: step 1/1. Its function is as follows. Catalyzes the condensation of iminoaspartate with dihydroxyacetone phosphate to form quinolinate. The sequence is that of Quinolinate synthase from Pseudomonas fluorescens (strain Pf0-1).